The primary structure comprises 273 residues: Glutamate racemase (273 aa).

Residues 9–10 (DS) and 41–42 (YG) each bind substrate. C73 acts as the Proton donor/acceptor in catalysis. A substrate-binding site is contributed by 74-75 (NT). The active-site Proton donor/acceptor is the C183. 184–185 (TH) contacts substrate.

The protein belongs to the aspartate/glutamate racemases family.

It catalyses the reaction L-glutamate = D-glutamate. It functions in the pathway cell wall biogenesis; peptidoglycan biosynthesis. Functionally, provides the (R)-glutamate required for cell wall biosynthesis. In Shewanella sp. (strain ANA-3), this protein is Glutamate racemase.